The chain runs to 308 residues: MAVPWEEYFRLALQEKLSTKLPEQAEDHVPPVLRLLEKRQELVDADQALQAQKEVFRTKTAALKQRWEQLEQKERELKGSFIRFDKFLQDSEARRNRALRRAAEERHQAGRREVEALRLWTQLQELRREHARLQRRLKRLEPCARLLEQALELLPGFQEVPELVARFDGLAETQAALRLREREQLAELEAARARLQQLRDAWPDEVLAQGQRRAQLQERLEAARERTLQWESKWIQIQNTAAEKTLLLGRSRMAVLNLFQLVCQHQGQPPTLDIEDTEGQLEHVKLFMQDLSAMLAGLGQAEPAAPAS.

Coiled coils occupy residues 34-143 (RLLE…LEPC) and 175-233 (AALR…WESK).

It belongs to the CFAP73 family.

Its subcellular location is the cytoplasm. The protein resides in the cytoskeleton. It localises to the cilium axoneme. Functionally, may play a role in ciliary/flagellar motility by regulating the assembly and the activity of axonemal inner dynein arm. The polypeptide is Cilia- and flagella-associated protein 73 (Homo sapiens (Human)).